We begin with the raw amino-acid sequence, 357 residues long: Anthranilate phosphoribosyltransferase (357 aa).

Residues Gly-91, 94–95 (GD), Thr-99, 101–104 (NIST), 119–127 (KHGNRSVSS), and Ser-131 each bind 5-phospho-alpha-D-ribose 1-diphosphate. Gly-91 contacts anthranilate. A Mg(2+)-binding site is contributed by Ser-103. Asn-122 provides a ligand contact to anthranilate. Residue Arg-177 coordinates anthranilate. Mg(2+) contacts are provided by Asp-235 and Glu-236.

The protein belongs to the anthranilate phosphoribosyltransferase family. Homodimer. The cofactor is Mg(2+).

It catalyses the reaction N-(5-phospho-beta-D-ribosyl)anthranilate + diphosphate = 5-phospho-alpha-D-ribose 1-diphosphate + anthranilate. It functions in the pathway amino-acid biosynthesis; L-tryptophan biosynthesis; L-tryptophan from chorismate: step 2/5. Functionally, catalyzes the transfer of the phosphoribosyl group of 5-phosphorylribose-1-pyrophosphate (PRPP) to anthranilate to yield N-(5'-phosphoribosyl)-anthranilate (PRA). The protein is Anthranilate phosphoribosyltransferase of Shewanella baltica (strain OS195).